Consider the following 757-residue polypeptide: MSLLFSRCNSIVTVKKDKRHMAEVNASPLKHFVTAKKKINGIFEQLGAYIQESAGFLEDTHRNTELDPVTTEEQVLDVKGYLSKVRGISEVLARRHMKVAFFGRTSNGKSTVINAMLWDKVLPSGIGHTTNCFLRVGGTDGHEAFLLTEGSEEKKSVKTVNQLAHALHQDEQLHAGSLVSVMWPNSKCPLLKDGLVLMDSPGIDVTTELDSWIDKFCLDADVFVLVANSESTLMQTEKQFFHKVSERLSRPNIFILNNRWDASASEPEYMEEVRRQHMERCTSFLVDELGVVDRAQAGDRIFFVSAKEVLSARVQKAQGMPEGGGALAEGFQVRMFEFQNFERRFEECISQSAVKTKFEQHTVRAKQIAEAVRLIMDSLHIAAQEQRVYCLEMREERQDRLRFIDKQLELLAQDYKLRIKQMTEEVERQVSTAMAEEIRRLSVLVDEYQMDFHPSPVVLKVYKNELHRHIEEGLGRNMSDRCSTAIASSLQTMQQDMIDGLKPLLPVSVRNQIDMLVPRQCFSLSYDLNCDKLCADFQEDIEFHFSLGWTMLVNRFLGPKNSRRALLGYNDQVQRPLPLTPANPSMPPLPQGSLTQEELMVSMVTGLASLTSRTSMGILVVGGVVWKAVGWRLIALSFGLYGLLYVYERLTWTTRAKERAFKRQFVEYASEKLQLIISYTGSNCSHQVQQELSGTFAHLCQQVDITRDNLEQEIAAMNKKVEALDSLQSKAKLLRNKAGWLDSELNMFIHQYLQPSR.

Residues 1–604 (MSLLFSRCNS…TQEELMVSMV (604 aa)) lie on the Cytoplasmic side of the membrane. Residues 30–94 (KHFVTAKKKI…VRGISEVLAR (65 aa)) are part of a helix bundle domain, formed by helices from N-terminal and C-terminal regions. In terms of domain architecture, Dynamin-type G spans 93-342 (ARRHMKVAFF…VRMFEFQNFE (250 aa)). The G1 motif stretch occupies residues 103–110 (GRTSNGKS). 106 to 111 (SNGKST) serves as a coordination point for GTP. Residue Thr111 is modified to Phosphothreonine; by PINK1. Residues 129 to 130 (TT) are G2 motif. Positions 199–202 (DSPG) are G3 motif. 258 to 261 (NRWD) serves as a coordination point for GTP. The G4 motif stretch occupies residues 258 to 261 (NRWD). Residue Glu288 is a region of interest, G5 motif. Ser305 and Lys307 together coordinate GTP. Residues 359–385 (EQHTVRAKQIAEAVRLIMDSLHIAAQE) are part of a helix bundle domain, formed by helices from N-terminal and C-terminal regions. Residues 406 to 435 (KQLELLAQDYKLRIKQMTEEVERQVSTAMA) are a coiled coil. The residue at position 442 (Ser442) is a Phosphoserine; by PINK1. The helical transmembrane segment at 605-625 (TGLASLTSRTSMGILVVGGVV) threads the bilayer. Residue Trp626 is a topological domain, mitochondrial intermembrane. Residues 627–647 (KAVGWRLIALSFGLYGLLYVY) traverse the membrane as a helical segment. The Cytoplasmic segment spans residues 648 to 757 (ERLTWTTRAK…FIHQYLQPSR (110 aa)). Positions 696–738 (FAHLCQQVDITRDNLEQEIAAMNKKVEALDSLQSKAKLLRNKA) form a coiled coil. The segment at 722-753 (EALDSLQSKAKLLRNKAGWLDSELNMFIHQYL) is part of a helix bundle domain, formed by helices from N-terminal and C-terminal regions.

This sequence belongs to the TRAFAC class dynamin-like GTPase superfamily. Dynamin/Fzo/YdjA family. Mitofusin subfamily. As to quaternary structure, forms homomultimers and heteromultimers with MFN1. Oligomerization is essential for mitochondrion fusion. Interacts with VAT1. Interacts with STOML2; may form heterooligomers. Interacts (phosphorylated) with PRKN. Interacts with EIF2AK3. Interacts with THG1L; THG1L probably functions as a guanyl-nucleotide exchange factor/GEF, activating MFN2. Phosphorylated by PINK1. In terms of processing, ubiquitinated by non-degradative ubiquitin by PRKN, promoting mitochondrial fusion; deubiquitination by USP30 inhibits mitochondrial fusion. Ubiquitinated by HUWE1 when dietary stearate (C18:0) levels are low; ubiquitination inhibits mitochondrial fusion. In terms of tissue distribution, ubiquitous. In brain, it is more expressed than MFN1, while it is expressed at a weaker level than MFN1 in heart and testis. Expressed at high level in elongating spermatids of seminiferous tubules. Expression is markedly down-regulated in highly proliferative vascular smooth muscle cells (VSMCs) from the genetic hypertensive animal model SHR, as well as in balloon-injured Wistar Kyoto arteries.

Its subcellular location is the mitochondrion outer membrane. The catalysed reaction is GTP + H2O = GDP + phosphate + H(+). Functionally, mitochondrial outer membrane GTPase that mediates mitochondrial clustering and fusion. Mitochondria are highly dynamic organelles, and their morphology is determined by the equilibrium between mitochondrial fusion and fission events. Overexpression induces the formation of mitochondrial networks. Membrane clustering requires GTPase activity and may involve a major rearrangement of the coiled coil domains. Plays a central role in mitochondrial metabolism and may be associated with obesity and/or apoptosis processes. Plays an important role in the regulation of vascular smooth muscle cell proliferation. Involved in the clearance of damaged mitochondria via selective autophagy (mitophagy). Is required for PRKN recruitment to dysfunctional mitochondria. Involved in the control of unfolded protein response (UPR) upon ER stress including activation of apoptosis and autophagy during ER stress. Acts as an upstream regulator of EIF2AK3 and suppresses EIF2AK3 activation under basal conditions. The polypeptide is Mitofusin-2 (Mfn2) (Rattus norvegicus (Rat)).